Consider the following 348-residue polypeptide: ELAV-like protein 3 (348 aa).

RRM domains are found at residues 34-112 (TNLI…YARP), 120-200 (ANLY…FANN), and 265-343 (WCIF…FKTS).

It belongs to the RRM elav family. Expression is neural-specific in both embryos and adults. Expressed from neurula stage onwards in primary motor-, inter- and sensory-neurons. Expressed in the closing neural tube and motor neurons of stage 18 embryos, and primarily in the ventricular zone and dorsal region of the tailbud and adult brain. Expressed from stage 26 onwards in the differentiating ganglion cell layer of the retina, extending to the inner nuclear layer at later stages.

RNA-binding protein that binds to AU-rich element (ARE) sequences of target mRNAs. May also bind poly-A tracts via RRM 3. May be involved in neuronal differentiation and maintenance. The sequence is that of ELAV-like protein 3 (elavl3) from Xenopus laevis (African clawed frog).